The chain runs to 488 residues: Malonate-semialdehyde dehydrogenase (488 aa).

Residues Ala-150, Phe-152, Lys-176, Glu-179, Arg-180, Ser-229, and Thr-251 each coordinate NAD(+). Residue Cys-284 is the Nucleophile of the active site. Glu-382 lines the NAD(+) pocket.

It belongs to the aldehyde dehydrogenase family. IolA subfamily. As to quaternary structure, homotetramer.

The catalysed reaction is 3-oxopropanoate + NAD(+) + CoA + H2O = hydrogencarbonate + acetyl-CoA + NADH + H(+). It catalyses the reaction 2-methyl-3-oxopropanoate + NAD(+) + CoA + H2O = propanoyl-CoA + hydrogencarbonate + NADH + H(+). It functions in the pathway polyol metabolism; myo-inositol degradation into acetyl-CoA; acetyl-CoA from myo-inositol: step 7/7. Functionally, catalyzes the oxidation of malonate semialdehyde (MSA) and methylmalonate semialdehyde (MMSA) into acetyl-CoA and propanoyl-CoA, respectively. Is involved in a myo-inositol catabolic pathway. Bicarbonate, and not CO2, is the end-product of the enzymatic reaction. The polypeptide is Malonate-semialdehyde dehydrogenase (Listeria monocytogenes serovar 1/2a (strain ATCC BAA-679 / EGD-e)).